Reading from the N-terminus, the 867-residue chain is Elongation factor 2 (867 aa).

One can recognise a tr-type G domain in the interval 17-368; the sequence is HNIRNLSVVA…MIVLHLPSPV (352 aa). 26–33 is a GTP binding site; the sequence is AHVDHGKS. Thr57 and Thr59 each carry phosphothreonine. GTP contacts are provided by residues 176–179 and 231–233; these read NKLD and SGL. His723 is subject to Diphthamide.

It belongs to the TRAFAC class translation factor GTPase superfamily. Classic translation factor GTPase family. EF-G/EF-2 subfamily. Post-translationally, phosphorylation by EF-2 kinase completely inactivates EF-2.

It localises to the cytoplasm. It catalyses the reaction GTP + H2O = GDP + phosphate + H(+). Its function is as follows. Catalyzes the GTP-dependent ribosomal translocation step during translation elongation. During this step, the ribosome changes from the pre-translocational (PRE) to the post-translocational (POST) state as the newly formed A-site-bound peptidyl-tRNA and P-site-bound deacylated tRNA move to the P and E sites, respectively. Catalyzes the coordinated movement of the two tRNA molecules, the mRNA and conformational changes in the ribosome. The chain is Elongation factor 2 from Blastocystis hominis.